The primary structure comprises 516 residues: uncharacterized protein (516 aa).

Transmembrane regions (helical) follow at residues 10 to 27, 32 to 54, 64 to 83, 95 to 117, and 165 to 187; these read IRYPELALFLVIAAGYWI, IGAFSLGPVTGALFAGLVVGDFA, SFLFLLFLFGVGYSVGPQFV, LLAVVVCLTGLAAAIAVGRILGL, and AVCYIFGYAGVIMWCTVVAPALL. RCK C-terminal domains are found at residues 208–291 and 296–376; these read KPGL…SRAE and RELL…NIGV. The next 4 helical transmembrane spans lie at 386-408, 412-430, 443-465, and 480-502; these read FVVLGLAIFFGGVVGVLVSFPVG, IALSTSVGTLLAGLLVGHL, GAISLMTSLGLAAFVGLTGIHAG, and LLGGMVVTLLPQIVGFCFGHFVL.

This sequence belongs to the AAE transporter (TC 2.A.81) family.

Its subcellular location is the cell membrane. This is an uncharacterized protein from Bradyrhizobium diazoefficiens (strain JCM 10833 / BCRC 13528 / IAM 13628 / NBRC 14792 / USDA 110).